A 144-amino-acid polypeptide reads, in one-letter code: Large ribosomal subunit protein uL16 (144 aa).

Belongs to the universal ribosomal protein uL16 family. Part of the 50S ribosomal subunit.

Binds 23S rRNA and is also seen to make contacts with the A and possibly P site tRNAs. The sequence is that of Large ribosomal subunit protein uL16 from Halalkalibacterium halodurans (strain ATCC BAA-125 / DSM 18197 / FERM 7344 / JCM 9153 / C-125) (Bacillus halodurans).